Here is a 482-residue protein sequence, read N- to C-terminus: Glutamyl-tRNA(Gln) amidotransferase subunit A (482 aa).

Catalysis depends on charge relay system residues Lys-75 and Ser-150. Ser-174 functions as the Acyl-ester intermediate in the catalytic mechanism.

This sequence belongs to the amidase family. GatA subfamily. In terms of assembly, heterotrimer of A, B and C subunits.

It carries out the reaction L-glutamyl-tRNA(Gln) + L-glutamine + ATP + H2O = L-glutaminyl-tRNA(Gln) + L-glutamate + ADP + phosphate + H(+). Functionally, allows the formation of correctly charged Gln-tRNA(Gln) through the transamidation of misacylated Glu-tRNA(Gln) in organisms which lack glutaminyl-tRNA synthetase. The reaction takes place in the presence of glutamine and ATP through an activated gamma-phospho-Glu-tRNA(Gln). The chain is Glutamyl-tRNA(Gln) amidotransferase subunit A from Cyanothece sp. (strain PCC 7425 / ATCC 29141).